Consider the following 457-residue polypeptide: UPF0328 protein ECU05_0030 (457 aa).

Disordered stretches follow at residues 1 to 112 (MPRP…PTAT) and 157 to 183 (VKSQ…NPRI). The span at 74–94 (HTEGCHTHEANPEPNTKHTET) shows a compositional bias: basic and acidic residues. Residues 102–112 (CPPPHPGPTAT) are compositionally biased toward pro residues.

The protein belongs to the UPF0328 family.

The protein is UPF0328 protein ECU05_0030 of Encephalitozoon cuniculi (strain GB-M1) (Microsporidian parasite).